A 421-amino-acid chain; its full sequence is Gamma-glutamyl phosphate reductase (421 aa).

The protein belongs to the gamma-glutamyl phosphate reductase family.

Its subcellular location is the cytoplasm. The enzyme catalyses L-glutamate 5-semialdehyde + phosphate + NADP(+) = L-glutamyl 5-phosphate + NADPH + H(+). Its pathway is amino-acid biosynthesis; L-proline biosynthesis; L-glutamate 5-semialdehyde from L-glutamate: step 2/2. In terms of biological role, catalyzes the NADPH-dependent reduction of L-glutamate 5-phosphate into L-glutamate 5-semialdehyde and phosphate. The product spontaneously undergoes cyclization to form 1-pyrroline-5-carboxylate. This is Gamma-glutamyl phosphate reductase from Acinetobacter baumannii (strain ACICU).